A 502-amino-acid polypeptide reads, in one-letter code: MKKSSKEISSSQSLKNGGSDHFFNTSLMYVLAACLASFIFGYQVSVLNTIKNFIVIEFGWCTGNKVECDDSTLKSSFLLASVFIGAVVGSGFSGYLVQHGRRFSLLVIYNFFILVSILTSITHHFHTILFSRLLSGFGIGLITVSVPMYISEMTHKDKKGAYGVLHQLFITFGIFVAVLLGMAMGEAPDAKSVDALGEFQKIWWRLMFFFPCLISILGIVLLTFFYKEETPYYLFENGKIEESKKILKKIYGTDNVDEPLKAIKDAVEQNEAAKKNSISLMRAMQIPSYRNVILLGCILSGLQQFTGINVLVSNSNELYKEFLSNKLITTLSVIMTVVNFLMTFPAIYIVEKLGRKTLLLCGCAGVICAFLPTAIANQIDSTSAFVKNLSIAATFVMIISFAVSYGPVLWIYLHEMFPSEIKDSAASLASLVNWVCAIIVVFPSDIIIKKSPTILFFIFSGMSILSFLFIFFFIKETKGGEIGTSPYITMEERQKHMGKSAV.

Topologically, residues 1–26 (MKKSSKEISSSQSLKNGGSDHFFNTS) are cytoplasmic. The helical transmembrane segment at 27 to 47 (LMYVLAACLASFIFGYQVSVL) threads the bilayer. Residues 48-76 (NTIKNFIVIEFGWCTGNKVECDDSTLKSS) are Extracellular-facing. C61 and C68 are disulfide-bonded. Residues 77 to 97 (FLLASVFIGAVVGSGFSGYLV) form a helical membrane-spanning segment. Topologically, residues 98 to 102 (QHGRR) are cytoplasmic. Residues 103–123 (FSLLVIYNFFILVSILTSITH) traverse the membrane as a helical segment. The Extracellular segment spans residues 124 to 132 (HFHTILFSR). The chain crosses the membrane as a helical span at residues 133-153 (LLSGFGIGLITVSVPMYISEM). Over 154-163 (THKDKKGAYG) the chain is Cytoplasmic. A helical membrane pass occupies residues 164 to 184 (VLHQLFITFGIFVAVLLGMAM). Residue Q167 participates in alpha-D-glucose binding. Q167 serves as a coordination point for beta-D-glucose. At 185–205 (GEAPDAKSVDALGEFQKIWWR) the chain is on the extracellular side. Residues 206–226 (LMFFFPCLISILGIVLLTFFY) traverse the membrane as a helical segment. Residues 227 to 291 (KEETPYYLFE…RAMQIPSYRN (65 aa)) are Cytoplasmic-facing. A helical membrane pass occupies residues 292 to 312 (VILLGCILSGLQQFTGINVLV). The alpha-D-glucose site is built by Q303, Q304, and N309. Residue Q303 coordinates beta-D-glucose. N309 contributes to the beta-D-glucose binding site. Residues 313 to 329 (SNSNELYKEFLSNKLIT) are Extracellular-facing. A helical transmembrane segment spans residues 330 to 350 (TLSVIMTVVNFLMTFPAIYIV). N339 contacts beta-D-glucose. Over 351–356 (EKLGRK) the chain is Cytoplasmic. The helical transmembrane segment at 357-377 (TLLLCGCAGVICAFLPTAIAN) threads the bilayer. Topologically, residues 378–390 (QIDSTSAFVKNLS) are extracellular. Residues 391-411 (IAATFVMIISFAVSYGPVLWI) form a helical membrane-spanning segment. W410 lines the alpha-D-glucose pocket. Over 412–427 (YLHEMFPSEIKDSAAS) the chain is Cytoplasmic. The helical transmembrane segment at 428-448 (LASLVNWVCAIIVVFPSDIII) threads the bilayer. Residues 449–453 (KKSPT) are Extracellular-facing. The chain crosses the membrane as a helical span at residues 454-474 (ILFFIFSGMSILSFLFIFFFI). Over 475-502 (KETKGGEIGTSPYITMEERQKHMGKSAV) the chain is Cytoplasmic.

The protein belongs to the major facilitator superfamily. Sugar transporter (TC 2.A.1.1) family. As to quaternary structure, homodimer.

The protein resides in the cell membrane. It catalyses the reaction D-glucose(out) = D-glucose(in). The catalysed reaction is D-fructose(out) = D-fructose(in). The enzyme catalyses D-galactose(in) = D-galactose(out). It carries out the reaction D-mannose(out) = D-mannose(in). It catalyses the reaction D-glucosamine(out) = D-glucosamine(in). The catalysed reaction is D-xylose(out) = D-xylose(in). With respect to regulation, inhibited by compound 3361 (3-O-((undec-10-en)-1-yl)-D-glucose). Its function is as follows. Sodium-independent facilitative hexose transporter. Can transport D-glucose and D-fructose. Can transport D-mannose, D-galactose, D-xylose and D-glucosamine. The protein is Hexose transporter 1 of Plasmodium vivax (strain Brazil I).